A 485-amino-acid chain; its full sequence is Membrane-bound lytic murein transglycosylase F (485 aa).

The signal sequence occupies residues 1-29 (MFAHTALRQRCAKWLFATGLFLLLGACVE). A non-LT domain region spans residues 30–267 (KPSTLERVKE…RLKDRYYGHV (238 aa)). An LT domain region spans residues 268–485 (DVLGYVGAYT…DKPAEQSPPM (218 aa)). Glu314 is a catalytic residue. Positions 465–485 (EGNLHVPGVNKDKPAEQSPPM) are disordered.

In the N-terminal section; belongs to the bacterial solute-binding protein 3 family. This sequence in the C-terminal section; belongs to the transglycosylase Slt family.

It is found in the cell outer membrane. The catalysed reaction is Exolytic cleavage of the (1-&gt;4)-beta-glycosidic linkage between N-acetylmuramic acid (MurNAc) and N-acetylglucosamine (GlcNAc) residues in peptidoglycan, from either the reducing or the non-reducing ends of the peptidoglycan chains, with concomitant formation of a 1,6-anhydrobond in the MurNAc residue.. Functionally, murein-degrading enzyme that degrades murein glycan strands and insoluble, high-molecular weight murein sacculi, with the concomitant formation of a 1,6-anhydromuramoyl product. Lytic transglycosylases (LTs) play an integral role in the metabolism of the peptidoglycan (PG) sacculus. Their lytic action creates space within the PG sacculus to allow for its expansion as well as for the insertion of various structures such as secretion systems and flagella. The chain is Membrane-bound lytic murein transglycosylase F from Pseudomonas putida (strain W619).